A 122-amino-acid polypeptide reads, in one-letter code: Holo-[acyl-carrier-protein] synthase (122 aa).

Positions 8 and 52 each coordinate Mg(2+).

This sequence belongs to the P-Pant transferase superfamily. AcpS family. Mg(2+) is required as a cofactor.

The protein resides in the cytoplasm. It carries out the reaction apo-[ACP] + CoA = holo-[ACP] + adenosine 3',5'-bisphosphate + H(+). In terms of biological role, transfers the 4'-phosphopantetheine moiety from coenzyme A to a Ser of acyl-carrier-protein. The polypeptide is Holo-[acyl-carrier-protein] synthase (Lachnoclostridium phytofermentans (strain ATCC 700394 / DSM 18823 / ISDg) (Clostridium phytofermentans)).